The following is a 446-amino-acid chain: Probable glycine dehydrogenase (decarboxylating) subunit 1 (446 aa).

This sequence belongs to the GcvP family. N-terminal subunit subfamily. The glycine cleavage system is composed of four proteins: P, T, L and H. In this organism, the P 'protein' is a heterodimer of two subunits.

It carries out the reaction N(6)-[(R)-lipoyl]-L-lysyl-[glycine-cleavage complex H protein] + glycine + H(+) = N(6)-[(R)-S(8)-aminomethyldihydrolipoyl]-L-lysyl-[glycine-cleavage complex H protein] + CO2. In terms of biological role, the glycine cleavage system catalyzes the degradation of glycine. The P protein binds the alpha-amino group of glycine through its pyridoxal phosphate cofactor; CO(2) is released and the remaining methylamine moiety is then transferred to the lipoamide cofactor of the H protein. The sequence is that of Probable glycine dehydrogenase (decarboxylating) subunit 1 from Protochlamydia amoebophila (strain UWE25).